The chain runs to 884 residues: uncharacterized protein (884 aa).

This is an uncharacterized protein from Mycobacterium bovis (strain ATCC BAA-935 / AF2122/97).